The chain runs to 446 residues: MMITLRKLPLAVAVAAGVMSAQAMAVDFHGYARSGIGWTGSGGEQQCFQTTGAQSKYRLGNECETYAELKLGQEVWKEGDKSFYFDTNVAYSVAQQNDWEATDPAFREANVQGKNLIEWLPGSTIWAGKRFYQRHDVHMIDFYYWDISGPGAGLENIDVGFGKLSLAATRSSEAGGSSSFASNNIYDYTNETANDVFDVRLAQMEINPGGTLELGVDYGRANLRDNYRLVDGASKDGWLFTAEHTQSVLKGFNKFVVQYATDSMTSQGKGLSQGSGVAFDNQKFAYNINNNGHMLRILDHGAISMGDNWDMMYVGMYQDINWDNDNGTKWWTVGIRPMYKWTPIMSTVMEIGYDNVESQRTGDKNNQYKITLAQQWQAGDSIWSRPAIRVFATYAKWDEKWGYDYNGDSKVNPNYGKAVPADFNGGSFGRGDSDEWTFGAQMEIWW.

The signal sequence occupies residues 1 to 25; it reads MMITLRKLPLAVAVAAGVMSAQAMA.

This sequence belongs to the porin LamB (TC 1.B.3) family. Homotrimer formed of three 18-stranded antiparallel beta-barrels, containing three independent channels.

It localises to the cell outer membrane. The enzyme catalyses beta-maltose(in) = beta-maltose(out). In terms of biological role, involved in the transport of maltose and maltodextrins. In Escherichia coli (strain SE11), this protein is Maltoporin.